We begin with the raw amino-acid sequence, 902 residues long: Auxin response factor 5 (902 aa).

The segment at residues 158-260 (FCKTLTASDT…QLMVGVRRAN (103 aa)) is a DNA-binding region (TF-B3). The segment at 497 to 543 (SEMVQPQNKLTVNPSASNTSGQEQNLSQSMSAPAKPENSTLSGCSSG) is disordered. The 85-residue stretch at 793-877 (RTYTKVQKTG…RCIRILSPTE (85 aa)) folds into the PB1 domain.

The protein belongs to the ARF family. In terms of assembly, homodimers and heterodimers. Interacts with BRX and the auxin-responsive proteins IAA1, IAA12 (BODENLOS), IAA17 and ARF7. As to expression, expressed in the whole plant with a lower expression in leaves. Detected in embryo axis, provascular tissues, procambium and some differentiated vascular regions of mature organs.

It is found in the nucleus. Its function is as follows. Auxin response factors (ARFs) are transcriptional factors that bind specifically to the DNA sequence 5'-TGTCTC-3' found in the auxin-responsive promoter elements (AuxREs). Seems to act as transcriptional activator. Formation of heterodimers with Aux/IAA proteins may alter their ability to modulate early auxin response genes expression. Mediates embryo axis formation and vascular tissues differentiation. Functionally redundant with ARF7. May be necessary to counteract AMP1 activity. The polypeptide is Auxin response factor 5 (ARF5) (Arabidopsis thaliana (Mouse-ear cress)).